The chain runs to 359 residues: UDP-N-acetylglucosamine--N-acetylmuramyl-(pentapeptide) pyrophosphoryl-undecaprenol N-acetylglucosamine transferase (359 aa).

UDP-N-acetyl-alpha-D-glucosamine is bound by residues 14 to 16 (TGG), N126, R166, S194, I248, and Q293.

Belongs to the glycosyltransferase 28 family. MurG subfamily.

It localises to the cell inner membrane. It catalyses the reaction di-trans,octa-cis-undecaprenyl diphospho-N-acetyl-alpha-D-muramoyl-L-alanyl-D-glutamyl-meso-2,6-diaminopimeloyl-D-alanyl-D-alanine + UDP-N-acetyl-alpha-D-glucosamine = di-trans,octa-cis-undecaprenyl diphospho-[N-acetyl-alpha-D-glucosaminyl-(1-&gt;4)]-N-acetyl-alpha-D-muramoyl-L-alanyl-D-glutamyl-meso-2,6-diaminopimeloyl-D-alanyl-D-alanine + UDP + H(+). Its pathway is cell wall biogenesis; peptidoglycan biosynthesis. In terms of biological role, cell wall formation. Catalyzes the transfer of a GlcNAc subunit on undecaprenyl-pyrophosphoryl-MurNAc-pentapeptide (lipid intermediate I) to form undecaprenyl-pyrophosphoryl-MurNAc-(pentapeptide)GlcNAc (lipid intermediate II). The protein is UDP-N-acetylglucosamine--N-acetylmuramyl-(pentapeptide) pyrophosphoryl-undecaprenol N-acetylglucosamine transferase of Verminephrobacter eiseniae (strain EF01-2).